The following is a 1156-amino-acid chain: Reverse gyrase 1 (1156 aa).

An RG N-terminal-type zinc finger spans residues 1 to 38 (MLKVYYTFGCPNCGGPIDDEHLLAGVPCSKCLPGRVEN). 4 residues coordinate Zn(2+): cysteine 10, cysteine 13, cysteine 28, and cysteine 31. ATP contacts are provided by residues glutamine 86 and 103 to 110 (APTGLGKT). A Helicase ATP-binding domain is found at 90–277 (IKRLAKSESF…ALRTLIGFEP (188 aa)). The DEAD box motif lies at 184–187 (DDSD). Residues 570–1156 (INIKTILLIV…VNSLKLDTNV (587 aa)) form a topoisomerase I region. The Toprim domain maps to 574–736 (TILLIVESPT…NIYRIKYHEI (163 aa)). Glutamate 580 contributes to the Mg(2+) binding site. The RG C-terminal-type zinc-finger motif lies at 655 to 682 (IYKCYNCGKTFTIKSNTCPYCGSVFISS). Zn(2+)-binding residues include cysteine 658, cysteine 661, cysteine 672, and cysteine 675. Aspartate 705 lines the Mg(2+) pocket. One can recognise a Topo IA-type catalytic domain in the interval 752–1143 (NMNLVKSQIV…DLHKEITQIS (392 aa)). Tyrosine 895 (O-(5'-phospho-DNA)-tyrosine intermediate) is an active-site residue.

It in the N-terminal section; belongs to the DEAD box helicase family. DDVD subfamily. This sequence in the C-terminal section; belongs to the type IA topoisomerase family. In terms of assembly, monomer. The cofactor is Zn(2+). It depends on Mg(2+) as a cofactor.

It localises to the cytoplasm. The enzyme catalyses ATP + H2O = ADP + phosphate + H(+). Functionally, modifies the topological state of DNA by introducing positive supercoils in an ATP-dependent process, increasing the linking number in steps of +1. Binds to single-stranded DNA, transiently cleaves and then rejoins the ends, introducing a positive supercoil in the process. The scissile phosphodiester is attacked by the catalytic tyrosine of the enzyme, resulting in the formation of a DNA-(5'-phosphotyrosyl)-enzyme intermediate. Probably involved in rewinding DNA strands in regions of the chromosome that have opened up to allow replication, transcription, DNA repair and/or for DNA protection. This Sulfurisphaera tokodaii (strain DSM 16993 / JCM 10545 / NBRC 100140 / 7) (Sulfolobus tokodaii) protein is Reverse gyrase 1.